Reading from the N-terminus, the 439-residue chain is Serine hydroxymethyltransferase (439 aa).

(6S)-5,6,7,8-tetrahydrofolate-binding positions include Leu119 and Gly123 to Leu125. N6-(pyridoxal phosphate)lysine is present on Lys228. Ser370–Phe372 contributes to the (6S)-5,6,7,8-tetrahydrofolate binding site.

The protein belongs to the SHMT family. In terms of assembly, homodimer. Requires pyridoxal 5'-phosphate as cofactor.

It localises to the cytoplasm. It carries out the reaction (6R)-5,10-methylene-5,6,7,8-tetrahydrofolate + glycine + H2O = (6S)-5,6,7,8-tetrahydrofolate + L-serine. The protein operates within one-carbon metabolism; tetrahydrofolate interconversion. Its pathway is amino-acid biosynthesis; glycine biosynthesis; glycine from L-serine: step 1/1. Its function is as follows. Catalyzes the reversible interconversion of serine and glycine with tetrahydrofolate (THF) serving as the one-carbon carrier. This reaction serves as the major source of one-carbon groups required for the biosynthesis of purines, thymidylate, methionine, and other important biomolecules. Also exhibits THF-independent aldolase activity toward beta-hydroxyamino acids, producing glycine and aldehydes, via a retro-aldol mechanism. This Chlorobium phaeobacteroides (strain BS1) protein is Serine hydroxymethyltransferase.